Here is a 151-residue protein sequence, read N- to C-terminus: UPF0735 ACT domain-containing protein SSP1116 (151 aa).

The ACT domain occupies threonine 74–methionine 149.

It belongs to the UPF0735 family.

This chain is UPF0735 ACT domain-containing protein SSP1116, found in Staphylococcus saprophyticus subsp. saprophyticus (strain ATCC 15305 / DSM 20229 / NCIMB 8711 / NCTC 7292 / S-41).